The chain runs to 877 residues: Leucine--tRNA ligase (877 aa).

Positions 43–53 (PYPSGRIHMGH) match the 'HIGH' region motif. The short motif at 628-632 (KMSKS) is the 'KMSKS' region element. K631 serves as a coordination point for ATP.

Belongs to the class-I aminoacyl-tRNA synthetase family.

The protein resides in the cytoplasm. It carries out the reaction tRNA(Leu) + L-leucine + ATP = L-leucyl-tRNA(Leu) + AMP + diphosphate. The protein is Leucine--tRNA ligase of Brucella abortus (strain S19).